The following is a 355-amino-acid chain: Glutamine synthetase root isozyme 4 (355 aa).

In terms of domain architecture, GS beta-grasp spans 19 to 99; it reads IIAEYIWIGG…VMCDCYTPAG (81 aa). The segment at 37-66 is disordered; sequence ARTLPGPVTDPSKLPKWNYDGSSTGQAPGE. The GS catalytic domain maps to 106–355; the sequence is KRYSAAKIFS…IAETTIVWKP (250 aa).

This sequence belongs to the glutamine synthetase family. In terms of assembly, homooctamer. As to expression, found in all the tissues examined with higher expression found in tissues of the root, stem and seedling shoot.

It localises to the cytoplasm. It catalyses the reaction L-glutamate + NH4(+) + ATP = L-glutamine + ADP + phosphate + H(+). Plays a role in the flow of nitrogen into nitrogenous organic compounds. The chain is Glutamine synthetase root isozyme 4 (GLN5) from Zea mays (Maize).